The primary structure comprises 268 residues: Tryptophan synthase alpha chain (268 aa).

Residues Glu49 and Asp60 each act as proton acceptor in the active site.

Belongs to the TrpA family. Tetramer of two alpha and two beta chains.

It carries out the reaction (1S,2R)-1-C-(indol-3-yl)glycerol 3-phosphate + L-serine = D-glyceraldehyde 3-phosphate + L-tryptophan + H2O. Its pathway is amino-acid biosynthesis; L-tryptophan biosynthesis; L-tryptophan from chorismate: step 5/5. In terms of biological role, the alpha subunit is responsible for the aldol cleavage of indoleglycerol phosphate to indole and glyceraldehyde 3-phosphate. The sequence is that of Tryptophan synthase alpha chain from Haemophilus influenzae (strain PittEE).